Consider the following 270-residue polypeptide: MTDERDDTPATVTQNPWQALRRLTPARIALGRAGVSLPTRPQLAFQAAHAQARDAVHLPFDPAALQAQLHAQGHATLLLHSAARDRDQYLQRPDLGRQLDAPSAQLLGDHAAAHPGGVDIALVVADGLSALAVHRHAAPLIAGVAEGVRAQGWSMAPIALVEQGRVAVADEVGERLGARMVVILIGERPGLSSPDSLGLYFTYAPRVGLTDAARNCISNVRPEGLGYAAAAHKLLYLMREAWRRQGSGVLLKEAAEVPLLEAGRRNFLLD.

Adenosylcob(III)alamin-binding residues include Val166, Glu187, and Cys216.

This sequence belongs to the EutC family. The basic unit is a heterodimer which dimerizes to form tetramers. The heterotetramers trimerize; 6 large subunits form a core ring with 6 small subunits projecting outwards. It depends on adenosylcob(III)alamin as a cofactor.

It localises to the bacterial microcompartment. The catalysed reaction is ethanolamine = acetaldehyde + NH4(+). It participates in amine and polyamine degradation; ethanolamine degradation. In terms of biological role, catalyzes the deamination of various vicinal amino-alcohols to oxo compounds. Allows this organism to utilize ethanolamine as the sole source of nitrogen and carbon in the presence of external vitamin B12. The chain is Ethanolamine ammonia-lyase small subunit from Ralstonia nicotianae (strain ATCC BAA-1114 / GMI1000) (Ralstonia solanacearum).